The primary structure comprises 5762 residues: Mucin-5B (5762 aa).

The first 25 residues, 1 to 25, serve as a signal peptide directing secretion; sequence MGAPSACRTLVLALAAMLVVPQAET. The tract at residues 27 to 50 is disordered; that stretch reads GPVEPSWENAGHTMDGGAPTSSPT. Residues 75 to 245 enclose the VWFD 1 domain; it reads RVCSTWGDFH…KLDGPTEQCP (171 aa). Intrachain disulfides connect Cys77-Cys207 and Cys99-Cys244. Residue Asn145 is glycosylated (N-linked (GlcNAc...) asparagine). Glu194 is a binding site for Cu(2+). N-linked (GlcNAc...) asparagine glycosylation is found at Asn201 and Asn254. His311 and His358 together coordinate Cu(2+). The region spanning 329 to 385 is the TIL 1 domain; sequence CPLNMQHQECGSPCTDTCSNPQRAQLCEDHCVDGCFCPPGTVLDDITHSGCLPLGQC. Residue Asn401 is glycosylated (N-linked (GlcNAc...) asparagine). One can recognise a VWFD 2 domain in the interval 423-598; it reads GTCSVQGGAH…NTWKAQAACA (176 aa). Intrachain disulfides connect Cys425–Cys562, Cys447–Cys597, and Cys469–Cys477. N-linked (GlcNAc...) asparagine glycosylation occurs at Asn515. 2 consecutive TIL domains span residues 695-752 and 805-855; these read CPKS…AQEC and NSSA…EEDC. Asn805 carries N-linked (GlcNAc...) asparagine glycosylation. The 73-residue stretch at 855–927 folds into the VWFC 1 domain; sequence CPCVHNEATY…EYILAQDYCG (73 aa). The region spanning 893–1062 is the VWFD 3 domain; the sequence is GTCVAYGDGH…NSWKLSPSCP (170 aa). Cystine bridges form between Cys895–Cys1026, Cys917–Cys1061, Cys926–Cys1023, and Cys944–Cys951. Residue Asn929 is glycosylated (N-linked (GlcNAc...) asparagine). 2 N-linked (GlcNAc...) asparagine glycosylation sites follow: Asn1276 and Asn1292. The stretch at 1333-1432 is one Cys-rich subdomain 1 repeat; that stretch reads CVREVCRWSS…RVLCCEYVPC (100 aa). The interval 1333–4228 is 7 X Cys-rich subdomain repeats; that stretch reads CVREVCRWSS…RVFCCNYGHC (2896 aa). Residue Trp1340 is glycosylated (C-linked (Man) tryptophan). Disordered regions lie at residues 1437–1462 and 1480–1502; these read APGT…QTTA and LTSQ…GTTT. Positions 1450–1462 are enriched in low complexity; sequence TEPAVPTPTQTTA. Residues 1503–1604 form a Cys-rich subdomain 2 repeat; that stretch reads CQPRCQWTEW…VLCCSDDHCR (102 aa). C-linked (Man) tryptophan glycosylation occurs at Trp1509. N-linked (GlcNAc...) asparagine glycosylation is present at Asn1556. The disordered stretch occupies residues 1607 to 1783; that stretch reads ATTPPPTTEL…NTTTSQGTTR (177 aa). The span at 1614 to 1624 shows a compositional bias: low complexity; it reads TELETATTTTT. Composition is skewed to polar residues over residues 1625–1638 and 1645–1662; these read QALF…SSPG and ASTT…SPRY. A compositionally biased stretch (low complexity) spans 1663 to 1684; that stretch reads TSTLGTATTGGPTTPAGSTEPT. Over residues 1689–1706 the composition is skewed to polar residues; that stretch reads ATSTLPTRSALPGTTGSL. 2 stretches are compositionally biased toward low complexity: residues 1739–1756 and 1765–1777; these read EPLT…LSTS and TETT…NTTT. Asn1774 carries an N-linked (GlcNAc...) asparagine glycan. The Cys-rich subdomain 3 repeat unit spans residues 1784–1885; it reads CQPKCEWTEW…VLCCDDYSHC (102 aa). Trp1790 carries C-linked (Man) tryptophan glycosylation. Low complexity predominate over residues 1890 to 1987; that stretch reads ATSSTATPSS…TSVTPIPSSS (98 aa). Disordered stretches follow at residues 1890 to 2019, 2031 to 2100, 2114 to 2211, and 2242 to 2302; these read ATSS…TAHT, GATG…GTTH, TGSM…HTVR, and TGTT…SSPT. An 11 X approximate tandem repeats, Ser/Thr-rich region spans residues 1890-2199; the sequence is ATSSTATPSS…VPNTMATTHG (310 aa). A compositionally biased stretch (polar residues) spans 1988 to 1997; sequence LGTTWTRLSQ. Residues 1998–2019 show a composition bias toward low complexity; the sequence is TTTPTATMSTATPSSTPETAHT. Residues 2114 to 2181 show a composition bias toward low complexity; the sequence is TGSMATPSSS…TSNTVTPSSA (68 aa). The segment covering 2182–2199 has biased composition (polar residues); it reads LGTTHTPPVPNTMATTHG. The stretch at 2313–2414 is one Cys-rich subdomain 4 repeat; that stretch reads GCEPQCAWSE…RVFCCNYGHC (102 aa). A glycan (C-linked (Man) tryptophan) is linked at Trp2320. Positions 2419 to 2756 are 11 X approximate tandem repeats, Ser/Thr-rich; the sequence is ATSSTAMPSS…VPNTTATTHG (338 aa). 3 disordered regions span residues 2443–2462, 2473–2522, and 2556–2861; these read ATTT…PGTT, TVTV…ATAL, and TTPT…PTSA. Over residues 2556–2738 the composition is skewed to low complexity; sequence TTPTATMSTA…TSSTVTPSSA (183 aa). Residues 2739–2786 are compositionally biased toward polar residues; that stretch reads LGTTHTPPVPNTTATTHGRSLSPSSPHTVRTAWTSATSGTLGTTHITE. A glycan (N-linked (GlcNAc...) asparagine) is linked at Asn2749. A compositionally biased stretch (low complexity) spans 2787–2861; the sequence is PSTGTSHTPA…TLLPSSPTSA (75 aa). One copy of the HAT 1 repeat lies at 2854 to 2886; it reads LPSSPTSAPITTVVTMGCEPQCAWSEWLDYSYP. A Cys-rich subdomain 5 repeat occupies 2871–2971; sequence CEPQCAWSEW…RVFCCNYGHC (101 aa). A glycan (C-linked (Man) tryptophan) is linked at Trp2877. Residues 2976–3456 form a 17 X approximate tandem repeats, Ser/Thr-rich region; sequence ATSSTATPSS…VPNTTATTHG (481 aa). Low complexity-rich tracts occupy residues 3001-3017 and 3026-3049; these read TTTA…STPG and TSTA…RTAT. 4 disordered regions span residues 3001-3049, 3256-3357, 3371-3469, and 3481-3561; these read TTTA…RTAT, TTPT…GTTH, TGSM…TVRT, and TTHI…PTSA. Residues 3371–3438 show a composition bias toward low complexity; that stretch reads TGSMATPSSS…TSSTVTPSSA (68 aa). Polar residues predominate over residues 3439–3456; the sequence is LGTTHTPPVPNTTATTHG. Asn3449 carries N-linked (GlcNAc...) asparagine glycosylation. Residues 3487–3561 are compositionally biased toward low complexity; sequence PSTVTSHTPA…TLLPSSPTSA (75 aa). The stretch at 3554 to 3586 is one HAT 2 repeat; sequence LPSSPTSAPITTVVTTGCEPQCAWSEWLDYSYP. A Cys-rich subdomain 6 repeat occupies 3571 to 3671; the sequence is CEPQCAWSEW…RVFCCNYGHC (101 aa). A C-linked (Man) tryptophan glycan is attached at Trp3577. The 11 X approximate tandem repeats, Ser/Thr-rich stretch occupies residues 3676–4013; the sequence is ATSSTATPSS…VPNTTATTHG (338 aa). 3 disordered regions span residues 3699-3779, 3813-3917, and 3956-4118; these read TATT…ATAL, TTPT…HTPT, and ATGS…PTSA. Residues 3956–3995 are compositionally biased toward low complexity; that stretch reads ATGSTTNPSSTPGTTPIPPVLTTTATTPAATSSTVTPSSA. A compositionally biased stretch (polar residues) spans 3996 to 4043; sequence LGTTHTPPVPNTTATTHGRSLSPSSPHTVRTAWTSATSGTLGTTHITE. A glycan (N-linked (GlcNAc...) asparagine) is linked at Asn4006. Positions 4044-4118 are enriched in low complexity; sequence PSTGTSHTPA…TLLPSSPTSA (75 aa). The HAT 3 repeat unit spans residues 4111 to 4143; the sequence is LPSSPTSAPITTVVTTGCEPQCAWSEWLDYSYP. The Cys-rich subdomain 7 repeat unit spans residues 4128 to 4228; sequence CEPQCAWSEW…RVFCCNYGHC (101 aa). Trp4134 carries C-linked (Man) tryptophan glycosylation. Residues 4233-4879 are 23 X approximate tandem repeats, Ser/Thr-rich; that stretch reads ATSSTAMPSS…TLGTAHTPKV (647 aa). Composition is skewed to low complexity over residues 4259–4274 and 4283–4389; these read TTAS…STPG and TSPA…PGTT. 4 disordered regions span residues 4259-4389, 4428-4447, 4458-4527, and 4541-4750; these read TTAS…PGTT, ATTT…PGTT, TVTV…AIPS, and TTPT…ATSF. Asn4804, Asn4960, Asn5017, Asn5024, Asn5046, Asn5096, and Asn5111 each carry an N-linked (GlcNAc...) asparagine glycan. One can recognise a VWFD 4 domain in the interval 5073-5261; the sequence is CICSMWGGSH…VPDSRKDGCW (189 aa). Intrachain disulfides connect Cys5075–Cys5221, Cys5097–Cys5260, and Cys5121–Cys5132. Asn5215 carries an N-linked (GlcNAc...) asparagine glycan. The 73-residue stretch at 5412-5484 folds into the VWFC 2 domain; that stretch reads CPCVGPDGFP…NPCCPETVCV (73 aa). Asn5486, Asn5526, Asn5565, Asn5566, Asn5602, Asn5612, Asn5663, Asn5677, and Asn5721 each carry an N-linked (GlcNAc...) asparagine glycan. The VWFC 3 domain occupies 5521-5587; it reads QLCSYNGTFY…VAGQCCGECV (67 aa). Cystine bridges form between Cys5653–Cys5705, Cys5672–Cys5719, Cys5681–Cys5735, and Cys5685–Cys5737. The region spanning 5653 to 5742 is the CTCK domain; the sequence is CEEDSCQVRI…DECGCTPFCV (90 aa).

In terms of assembly, homomultimer; disulfide-linked. The N- and C-terminus mediate their assembly into higher order structures to form filaments. The CTCK domains of two polypeptides associate in the endoplasmic reticulum to generate intermolecularly disulfide-bonded dimers. These dimers progress to the Golgi apparatus, which is a more acidic environment than the endoplasmic reticulum. Under acidic conditions, the N-termini form non-covalent intermolecular interactions that juxtapose assemblies from different CTCK-linked dimers to produce long, disulfide-linked polymers that remain highly compact until secretion. Post-translationally, highly glycosylated. C-, N- and O-glycosylated. C-mannosylated in the Cys-rich subdomains probably on the first Trp residue of the WXXW motif. Highly O-glycosylated in the Ser/Thr-rich tandem repeat (TR) region. The repeat region is about 59% O-glycosylated with a high abundance of NeuAc(2)Hex(1)HexNac1-ol. In terms of tissue distribution, expressed on surface airway epithelia. Expressed mainly in mucous cells of submucosal glands of airway tissues. Highly expressed in the sublingual gland. Also found in submaxillary glands, endocervix, gall bladder, and pancreas.

It is found in the secreted. In terms of biological role, gel-forming mucin that is thought to contribute to the lubricating and viscoelastic properties of whole saliva and cervical mucus. The chain is Mucin-5B (MUC5B) from Homo sapiens (Human).